A 417-amino-acid polypeptide reads, in one-letter code: Tryptophan synthase beta chain (417 aa).

An N6-(pyridoxal phosphate)lysine modification is found at K99.

The protein belongs to the TrpB family. In terms of assembly, tetramer of two alpha and two beta chains. The cofactor is pyridoxal 5'-phosphate.

The catalysed reaction is (1S,2R)-1-C-(indol-3-yl)glycerol 3-phosphate + L-serine = D-glyceraldehyde 3-phosphate + L-tryptophan + H2O. It participates in amino-acid biosynthesis; L-tryptophan biosynthesis; L-tryptophan from chorismate: step 5/5. The beta subunit is responsible for the synthesis of L-tryptophan from indole and L-serine. The chain is Tryptophan synthase beta chain (trpB) from Corynebacterium glutamicum (strain ATCC 13032 / DSM 20300 / JCM 1318 / BCRC 11384 / CCUG 27702 / LMG 3730 / NBRC 12168 / NCIMB 10025 / NRRL B-2784 / 534).